The primary structure comprises 909 residues: Glucan endo-1,3-beta-D-glucosidase ARB_01444 (909 aa).

The first 23 residues, 1 to 23 (MKPYTTLPGVAVLVSLLTQSAHA), serve as a signal peptide directing secretion. The segment at 136–187 (KRSPAPQRHPPAPTKATAGYQFTNCTSTSNPGPTATSPTSGIPSQPSAPPAT) is disordered. Residues 155 to 180 (YQFTNCTSTSNPGPTATSPTSGIPSQ) show a composition bias toward polar residues. N-linked (GlcNAc...) asparagine glycosylation is found at N159, N239, and N259. A beta-sandwich subdomain region spans residues 191-430 (QDIFQPIAKD…KGVIQVAKNP (240 aa)). The GH81 domain maps to 191–909 (QDIFQPIAKD…AGEYSTYIAL (719 aa)). The segment at 431 to 524 (SAEEGEGIYD…GDSWTMVEGN (94 aa)) is alpha/beta subdomain. The tract at residues 539 to 909 (SSQVTLSEGA…AGEYSTYIAL (371 aa)) is (alpha/beta)6 barrel subdomain. D654 is an active-site residue. Residues H658, D727, E729, and E733 each coordinate (1,3-beta-D-glucosyl)n. Residues E729 and E733 contribute to the active site. Residues 798–800 (KID) form a may provide specificity for triple-helical beta-glucan region. Y811 is a binding site for (1,3-beta-D-glucosyl)n.

It belongs to the glycosyl hydrolase 81 family.

It localises to the secreted. It is found in the cell wall. The catalysed reaction is Hydrolysis of (1-&gt;3)-beta-D-glucosidic linkages in (1-&gt;3)-beta-D-glucans.. Cleaves internal linkages in 1,3-beta-glucan. Probably involved in cell separation after cytokinesis. In Arthroderma benhamiae (strain ATCC MYA-4681 / CBS 112371) (Trichophyton mentagrophytes), this protein is Glucan endo-1,3-beta-D-glucosidase ARB_01444.